We begin with the raw amino-acid sequence, 382 residues long: Non-structural maintenance of chromosomes element 4 homolog A (382 aa).

Over residues 1 to 21 the composition is skewed to basic and acidic residues; it reads MSGDSSGRRPEGRGRGRDPHR. The disordered stretch occupies residues 1 to 80; sequence MSGDSSGRRP…ASLEEETDPS (80 aa). Positions 31–41 are enriched in low complexity; that stretch reads RSPLSPGSRRG. Basic and acidic residues predominate over residues 42–55; it reads AAPERREAPERPGL. Residues 56 to 78 show a composition bias toward acidic residues; sequence EDTEPSDSGDEMIDPASLEEETD. Thr-342 bears the Phosphothreonine mark. Ser-374 carries the phosphoserine modification.

The protein belongs to the NSE4 family. Component of the SMC5-SMC6 complex which consists at least of SMC5, SMC6, NSMCE2, NSMCE1, NSMCE4A or EID3 and NSMCE3. NSMCE1, NSMCE4A or EID3 and NSMCE3 probably form a subcomplex that bridges the head domains of the SMC5:SMC6 heterodimer. Interacts with NSMCE3.

The protein resides in the nucleus. The protein localises to the chromosome. It localises to the telomere. Component of the SMC5-SMC6 complex, a complex involved in repair of DNA double-strand breaks by homologous recombination. The complex may promote sister chromatid homologous recombination by recruiting the SMC1-SMC3 cohesin complex to double-strand breaks. The complex is required for telomere maintenance via recombination and mediates sumoylation of shelterin complex (telosome) components. The chain is Non-structural maintenance of chromosomes element 4 homolog A (NSMCE4A) from Bos taurus (Bovine).